A 466-amino-acid chain; its full sequence is Adenosylhomocysteinase (466 aa).

Substrate-binding residues include Thr57, Asp132, and Glu192. Residue 193 to 195 (TTT) participates in NAD(+) binding. 2 residues coordinate substrate: Lys222 and Asp226. NAD(+) contacts are provided by residues Asn227, 256–261 (GYGDVG), Glu279, Asn314, 335–337 (IGH), and Asn380.

Belongs to the adenosylhomocysteinase family. NAD(+) is required as a cofactor.

The protein localises to the cytoplasm. It catalyses the reaction S-adenosyl-L-homocysteine + H2O = L-homocysteine + adenosine. It functions in the pathway amino-acid biosynthesis; L-homocysteine biosynthesis; L-homocysteine from S-adenosyl-L-homocysteine: step 1/1. May play a key role in the regulation of the intracellular concentration of adenosylhomocysteine. The chain is Adenosylhomocysteinase from Rhizobium meliloti (strain 1021) (Ensifer meliloti).